The following is a 337-amino-acid chain: Basic membrane protein A1 (337 aa).

The first 17 residues, 1-17 (MNKLLLLILFECIIFLS), serve as a signal peptide directing secretion. Cys-18 carries N-palmitoyl cysteine lipidation. Cys-18 is lipidated: S-diacylglycerol cysteine.

This sequence belongs to the BMP lipoprotein family. As to quaternary structure, monomer.

Its subcellular location is the cell inner membrane. Immunogenic protein. May be part of an ABC-type nucleoside uptake system involved in the purine salvage pathway. This chain is Basic membrane protein A1 (bmpA1), found in Borrelia garinii subsp. bavariensis (strain ATCC BAA-2496 / DSM 23469 / PBi) (Borreliella bavariensis).